The following is a 617-amino-acid chain: Phosphatidylinositol-3,5-bisphosphate 3-phosphatase MTMR6 (617 aa).

Residues 1 to 101 (MEHIRTTKVE…YNSLLQLSKQ (101 aa)) form the GRAM domain. Positions 2-141 (EHIRTTKVEQ…AEYERMGVPN (140 aa)) are interaction with RAB1B. Y108 carries the phosphotyrosine modification. Residues 124-499 (GWQLIDLAAE…FNFKFWRNMY (376 aa)) form the Myotubularin phosphatase domain. Residues N248, N273, and I274 each contribute to the a 1,2-diacyl-sn-glycero-3-phospho-(1D-myo-inositol-3,5-bisphosphate) site. The a 1,2-diacyl-sn-glycero-3-phospho-(1D-myo-inositol-3-phosphate) site is built by N248, N273, and I274. C336 serves as the catalytic Phosphocysteine intermediate. Positions 337, 338, 339, 340, 341, 342, 378, and 382 each coordinate a 1,2-diacyl-sn-glycero-3-phospho-(1D-myo-inositol-3,5-bisphosphate). Residues S337, D338, G339, W340, D341, and R342 each coordinate a 1,2-diacyl-sn-glycero-3-phospho-(1D-myo-inositol-3-phosphate). R382 lines the a 1,2-diacyl-sn-glycero-3-phospho-(1D-myo-inositol-3-phosphate) pocket. A phosphoserine mark is found at S557, S585, and S607.

The protein belongs to the protein-tyrosine phosphatase family. Non-receptor class myotubularin subfamily. As to quaternary structure, homodimer. Heterodimer (via C-terminus) with MTMR9 (via C-terminus). Interacts with ALKBH4. Interacts with KCNN4. Interacts (via GRAM domain) with RAB1B (in GDP-bound form); the interaction regulates MTMR6 recruitment to the endoplasmic reticulum-Golgi intermediate compartment. As to expression, isoform 1: Ubiquitously expressed including in heart, brain, spleen, lung, liver, muscle, kidney and testis (at protein level). Isoform 2: Expressed in testis (at protein level).

The protein localises to the cytoplasm. Its subcellular location is the endoplasmic reticulum-Golgi intermediate compartment. It localises to the cell projection. The protein resides in the ruffle membrane. It is found in the endoplasmic reticulum. The catalysed reaction is a 1,2-diacyl-sn-glycero-3-phospho-(1D-myo-inositol-3,5-bisphosphate) + H2O = a 1,2-diacyl-sn-glycero-3-phospho-(1D-myo-inositol-5-phosphate) + phosphate. It carries out the reaction a 1,2-diacyl-sn-glycero-3-phospho-(1D-myo-inositol-3-phosphate) + H2O = a 1,2-diacyl-sn-glycero-3-phospho-(1D-myo-inositol) + phosphate. It catalyses the reaction 1,2-dioctanoyl-sn-glycero-3-phospho-(1D-myo-inositol-3,5-bisphosphate) + H2O = 1,2-dioctanoyl-sn-glycero-3-phospho-(1D-myo-inositol-5-phosphate) + phosphate. The enzyme catalyses 1,2-dioctanoyl-sn-glycero-3-phospho-(1-D-myo-inositol-3-phosphate) + H2O = 1,2-dioctanoyl-sn-glycero-3-phospho-(1D-myo-inositol) + phosphate. Allosterically activated by phosphatidylserine and/or phosphatidylinositol 4-phosphate (PtdIns(4)P), and phosphatidylinositol 5-phosphate (PtdIns(5)P). Interaction with MTMR9 increases catalytic activity towards phosphatidylinositol 3,5-bisphosphate. In terms of biological role, lipid phosphatase that specifically dephosphorylates the D-3 position of phosphatidylinositol 3-phosphate and phosphatidylinositol 3,5-bisphosphate, generating phosphatidylinositol and phosphatidylinositol 5-phosphate. Binds with high affinity to phosphatidylinositol 3,5-bisphosphate (PtdIns(3,5)P2) but also to phosphatidylinositol 3-phosphate (PtdIns(3)P), phosphatidylinositol 4-phosphate (PtdIns(4)P), and phosphatidylinositol 5-phosphate (PtdIns(5)P), phosphatidic acid and phosphatidylserine. Negatively regulates ER-Golgi protein transport. Probably in association with MTMR9, plays a role in the late stages of macropinocytosis by dephosphorylating phosphatidylinositol 3-phosphate in membrane ruffles. Acts as a negative regulator of KCNN4/KCa3.1 channel activity in CD4(+) T-cells possibly by decreasing intracellular levels of phosphatidylinositol 3-phosphate. Negatively regulates proliferation of reactivated CD4(+) T-cells. In complex with MTMR9, negatively regulates DNA damage-induced apoptosis. The formation of the MTMR6-MTMR9 complex stabilizes both MTMR6 and MTMR9 protein levels. The polypeptide is Phosphatidylinositol-3,5-bisphosphate 3-phosphatase MTMR6 (Mus musculus (Mouse)).